A 269-amino-acid polypeptide reads, in one-letter code: Flagellar brake protein YcgR (269 aa).

Positions 1–42 are disordered; sequence MLREPMNQHDAPGPAETGADSDAETDAETDAETDAGAADDRY. A compositionally biased stretch (acidic residues) spans 19-33; that stretch reads ADSDAETDAETDAET. One can recognise a PilZ domain in the interval 149–261; it reads QRRRHFRART…MENFLQRLVF (113 aa).

The protein belongs to the YcgR family. In terms of assembly, monomer. Interacts with the flagellar basal bodies.

It is found in the bacterial flagellum basal body. In terms of biological role, acts as a flagellar brake, regulating swimming and swarming in a bis-(3'-5') cyclic diguanylic acid (c-di-GMP)-dependent manner. Binds 1 c-di-GMP dimer per subunit. Increasing levels of c-di-GMP lead to decreased motility. The sequence is that of Flagellar brake protein YcgR from Cupriavidus taiwanensis (strain DSM 17343 / BCRC 17206 / CCUG 44338 / CIP 107171 / LMG 19424 / R1) (Ralstonia taiwanensis (strain LMG 19424)).